The chain runs to 382 residues: S-adenosylmethionine synthase (382 aa).

Residue His16 participates in ATP binding. Mg(2+) is bound at residue Asp18. Glu44 contacts K(+). L-methionine is bound by residues Glu57 and Gln100. The interval 100–110 (QSPDIAQGVDN) is flexible loop. ATP-binding positions include 165 to 167 (DAK), 231 to 232 (RF), Asp240, 246 to 247 (RK), and Lys267. Position 240 (Asp240) interacts with L-methionine. Lys271 lines the L-methionine pocket.

It belongs to the AdoMet synthase family. In terms of assembly, homotetramer; dimer of dimers. Mg(2+) serves as cofactor. It depends on K(+) as a cofactor.

The protein resides in the cytoplasm. The enzyme catalyses L-methionine + ATP + H2O = S-adenosyl-L-methionine + phosphate + diphosphate. It functions in the pathway amino-acid biosynthesis; S-adenosyl-L-methionine biosynthesis; S-adenosyl-L-methionine from L-methionine: step 1/1. Catalyzes the formation of S-adenosylmethionine (AdoMet) from methionine and ATP. The overall synthetic reaction is composed of two sequential steps, AdoMet formation and the subsequent tripolyphosphate hydrolysis which occurs prior to release of AdoMet from the enzyme. The chain is S-adenosylmethionine synthase from Legionella pneumophila (strain Paris).